The sequence spans 284 residues: NADH-cytochrome b5 reductase 1 (284 aa).

The helical transmembrane segment at 7 to 27 (KLVVVIVIVVVPLLFKFIIGP) threads the bilayer. The region spanning 38–142 (NDFQSFPLVE…KGPRGNYHYE (105 aa)) is the FAD-binding FR-type domain. FAD is bound at residue 148 to 180 (HLGMIAGGTGIAPMYQIMKAIAMDSHDTTKVSL).

It belongs to the flavoprotein pyridine nucleotide cytochrome reductase family. Monomer. Component of the 2-(3-amino-3-carboxypropyl)histidine synthase complex composed of DPH1, DPH2, KTI11/DPH3 and a NADH-dependent reductase, predominantly CBR1. Interacts with KTI11/DPH3. Interacts with STE20. It depends on FAD as a cofactor.

It is found in the mitochondrion outer membrane. It catalyses the reaction 2 Fe(III)-[cytochrome b5] + NADH = 2 Fe(II)-[cytochrome b5] + NAD(+) + H(+). The enzyme catalyses 2 Fe(3+)-[Dph3] + NADH = 2 Fe(2+)-[Dph3] + NAD(+) + H(+). It participates in protein modification; peptidyl-diphthamide biosynthesis. Its activity is regulated as follows. Competitively inhibited by NAD(+). Inhibited by mercurials such as p-chloromercuribenzoate (PCMB) and HgCl(2). Enzymatic activity increases under anaerobic conditions. Its function is as follows. NADH-dependent reductase for KTI11/DPH3 and cytochrome b5. Required for the first step of diphthamide biosynthesis, a post-translational modification of histidine which occurs in elongation factor 2. DPH1 and DPH2 transfer a 3-amino-3-carboxypropyl (ACP) group from S-adenosyl-L-methionine (SAM) to a histidine residue, the reaction is assisted by a reduction system comprising KTI11/DPH3 and a NADH-dependent reductase, predominantly CBR1. By reducing KTI11/DPH3, also involved in the formation of the tRNA wobble base modification mcm5s 2U (5-methoxycarbonylmethyl-2-thiouridine), mediated by the elongator complex. The cytochrome b5/NADH cytochrome b5 reductase electron transfer system supports the catalytic activity of several sterol biosynthetic enzymes. Plays a role in bud morphology. The sequence is that of NADH-cytochrome b5 reductase 1 (CBR1) from Saccharomyces cerevisiae (strain YJM789) (Baker's yeast).